The primary structure comprises 409 residues: Peptidase T (409 aa).

His78 lines the Zn(2+) pocket. Asp80 is an active-site residue. Asp140 contributes to the Zn(2+) binding site. The Proton acceptor role is filled by Glu173. Zn(2+) is bound by residues Glu174, Asp196, and His379.

This sequence belongs to the peptidase M20B family. The cofactor is Zn(2+).

Its subcellular location is the cytoplasm. It carries out the reaction Release of the N-terminal residue from a tripeptide.. In terms of biological role, cleaves the N-terminal amino acid of tripeptides. This is Peptidase T from Salmonella heidelberg (strain SL476).